Here is a 152-residue protein sequence, read N- to C-terminus: Nucleoside diphosphate kinase A 1 (152 aa).

ATP-binding residues include Lys12, Phe60, Arg88, Thr94, Arg105, and Asn115. His118 functions as the Pros-phosphohistidine intermediate in the catalytic mechanism.

This sequence belongs to the NDK family. In terms of assembly, homohexamer. It depends on Mg(2+) as a cofactor. The N-terminus is blocked.

Its subcellular location is the cytoplasm. It localises to the cell membrane. The protein localises to the nucleus. The enzyme catalyses a 2'-deoxyribonucleoside 5'-diphosphate + ATP = a 2'-deoxyribonucleoside 5'-triphosphate + ADP. It carries out the reaction a ribonucleoside 5'-diphosphate + ATP = a ribonucleoside 5'-triphosphate + ADP. Autophosphorylation at His-118 increases serine/threonine protein kinase activity of the enzyme. Interaction with the SET complex inhibits exonuclease activity. Its function is as follows. Major role in the synthesis of nucleoside triphosphates other than ATP. Possesses nucleoside-diphosphate kinase, serine/threonine-specific protein kinase, geranyl and farnesyl pyrophosphate kinase, histidine protein kinase and 3'-5' exonuclease activities. Involved in cell proliferation, differentiation and development, signal transduction, G protein-coupled receptor endocytosis, and gene expression. Required for neural development including neural patterning and cell fate determination. The sequence is that of Nucleoside diphosphate kinase A 1 (NME1-1) from Bos taurus (Bovine).